Here is a 465-residue protein sequence, read N- to C-terminus: Citrate synthase-like protein (465 aa).

Residues 13-40 (HISDMVDSTKMNGNQSQDTAGRADTPVS) are disordered. Positions 21-31 (TKMNGNQSQDT) are enriched in polar residues. Catalysis depends on residues His-357 and Asp-413.

Belongs to the citrate synthase family.

It participates in secondary metabolite biosynthesis. Its function is as follows. Citrate synthase-like protein; part of the gene cluster that mediates the biosynthesis of squalestatin S1 (SQS1, also known as zaragozic acid A), a heavily oxidized fungal polyketide that offers potent cholesterol lowering activity by targeting squalene synthase (SS). SQS1 is composed of a 2,8-dioxobicyclic[3.2.1]octane-3,4,5-tricarboxyclic acid core that is connected to two lipophilic polyketide arms. These initial steps feature the priming of an unusual benzoic acid starter unit onto the highly reducing polyketide synthase pks2, followed by oxaloacetate extension and product release to generate a tricarboxylic acid containing product. The phenylalanine ammonia lyase (PAL) M7 and the acyl-CoA ligase M9 are involved in transforming phenylalanine into benzoyl-CoA. The citrate synthase-like protein R3 is involved in connecting the C-alpha-carbons of the hexaketide chain and oxaloacetate to afford the tricarboxylic acid unit. The potential hydrolytic enzymes, M8 and M10, are in close proximity to pks2 and may participate in product release. On the other side, the tetraketide arm is synthesized by a the squalestatin tetraketide synthase pks1 and enzymatically esterified to the core in the last biosynthetic step, by the acetyltransferase M4. The biosynthesis of the tetraketide must involve 3 rounds of chain extension. After the first and second rounds methyl-transfer occurs, and in all rounds of extension the ketoreductase and dehydratase are active. The enoyl reductase and C-MeT of pks1 are not active in the final round of extension. The acetyltransferase M4 appears to have a broad substrate selectivity for its acyl CoA substrate, allowing the in vitro synthesis of novel squalestatins. The biosynthesis of SQS1 requires several oxidative steps likely performed by oxidoreductases M1, R1 and R2. Finally, in support of the identification of the cluster as being responsible for SQS1 production, the cluster contains a gene encoding a putative squalene synthase (SS) R6, suggesting a likely mechanism for self-resistance. The chain is Citrate synthase-like protein from Phoma sp. (strain ATCC 20986 / MF5453).